Reading from the N-terminus, the 416-residue chain is Orexin/Hypocretin receptor type 1 (416 aa).

Residues 1–22 are disordered; the sequence is MEPSATPGAQPGVPTSSGEPFH. Residues 1–46 are Extracellular-facing; sequence MEPSATPGAQPGVPTSSGEPFHLPPDYEDEFLRYLWRDYLYPKQYE. The required for response to orexin-A stretch occupies residues 26–41; it reads DYEDEFLRYLWRDYLY. Residues 47–67 form a helical membrane-spanning segment; it reads WVLIAAYVAVFLIALVGNTLV. Residues 68 to 82 are Cytoplasmic-facing; the sequence is CLAVWRNHHMRTVTN. The chain crosses the membrane as a helical span at residues 83–105; it reads YFIVNLSLADVLVTAICLPASLL. Topologically, residues 106 to 119 are extracellular; it reads VDITESWLFGHALC. Cysteines 119 and 202 form a disulfide. A helical membrane pass occupies residues 120–140; that stretch reads KVIPYLQAVSVSVAVLTLSFI. Topologically, residues 141-160 are cytoplasmic; the sequence is ALDRWYAICHPLLFKSTARR. The chain crosses the membrane as a helical span at residues 161-182; that stretch reads ARGSILGIWAVSLAVMVPQAAV. At 183 to 213 the chain is on the extracellular side; it reads MECSSVLPELANRTRLFSVCDERWADELYPK. Asparagine 194 is a glycosylation site (N-linked (GlcNAc...) asparagine). Residues 214–235 form a helical membrane-spanning segment; sequence IYHSCFFFVTYLAPLGLMGMAY. Residues 236 to 298 lie on the Cytoplasmic side of the membrane; it reads FQIFRKLWGP…QMRARRKTAK (63 aa). The helical transmembrane segment at 299–321 threads the bilayer; that stretch reads MLMVVLLVFALCYLPISVLNVLK. At 322 to 336 the chain is on the extracellular side; that stretch reads RVFGMFRQASDREAV. The chain crosses the membrane as a helical span at residues 337 to 360; it reads YACFTFSHWLVYANSAANPIIYNF. Residues 361 to 416 lie on the Cytoplasmic side of the membrane; it reads LSGKFREQFKAAFSCCLPGLGPSSSARHKSLSLQSRCSVSKVSEHVVLTTVTTVLS.

The protein belongs to the G-protein coupled receptor 1 family. Highly expressed in the brain in the prefrontal cortex, hippocampus, paraventricular thalamus, ventromedial hypothalamus, arcuate nucleus, dorsal raphe nucleus, and locus coeruleus. Not detected in the spleen, lung, liver, skeletal muscle, kidney and testis. Orexin receptor mRNA expression has also been reported in the adrenal gland, enteric nervous system, and pancreas.

The protein resides in the cell membrane. Functionally, moderately selective excitatory receptor for orexin-A and, with a lower affinity, for orexin-B neuropeptide. Triggers an increase in cytoplasmic Ca(2+) levels in response to orexin-A binding. This chain is Orexin/Hypocretin receptor type 1, found in Rattus norvegicus (Rat).